The primary structure comprises 379 residues: MPAVTYEHIKTCKQSGARLGIVHTPHGSFETPMFMPVGTKATVKTMSPEELRQIEAKIILGNTYHLWLQPGNDIIKHAGGLHKFMNWDGPILTDSGGFQVFSLSNLRKITEEGVEFRHHTNGSKLFLSPEKSMQIQNDLGSDIMMAFDECPPMPAEYDYVKKSIERTTRWAKRCLDAHQRPEDQALFGIIQGGEHEDLREQSAKDLVELDFPGYAIGGLSVGEPKPVMYKMVEHTEQFMPKDKPRYLMGVGSPDALIECSIRGMDMFDCVLPTRIARNGTCMTSQGRLVIKNAKFADDLRPLDENCDCYTCQNYSRAYIRHLIKAEETFGIRLTTIHNLHFLLKLMEDIRQAIREDRLLDFKEEFFEQYGLNVENPKNF.

Aspartate 94 functions as the Proton acceptor in the catalytic mechanism. Substrate contacts are provided by residues 94–98 (DSGGF), aspartate 148, glutamine 191, and glycine 218. An RNA binding region spans residues 249–255 (GVGSPDA). The Nucleophile role is filled by aspartate 268. The RNA binding; important for wobble base 34 recognition stretch occupies residues 273 to 277 (TRIAR). Residues cysteine 306, cysteine 308, cysteine 311, and histidine 337 each contribute to the Zn(2+) site.

The protein belongs to the queuine tRNA-ribosyltransferase family. Homodimer. Within each dimer, one monomer is responsible for RNA recognition and catalysis, while the other monomer binds to the replacement base PreQ1. Zn(2+) is required as a cofactor.

It catalyses the reaction 7-aminomethyl-7-carbaguanine + guanosine(34) in tRNA = 7-aminomethyl-7-carbaguanosine(34) in tRNA + guanine. The protein operates within tRNA modification; tRNA-queuosine biosynthesis. Catalyzes the base-exchange of a guanine (G) residue with the queuine precursor 7-aminomethyl-7-deazaguanine (PreQ1) at position 34 (anticodon wobble position) in tRNAs with GU(N) anticodons (tRNA-Asp, -Asn, -His and -Tyr). Catalysis occurs through a double-displacement mechanism. The nucleophile active site attacks the C1' of nucleotide 34 to detach the guanine base from the RNA, forming a covalent enzyme-RNA intermediate. The proton acceptor active site deprotonates the incoming PreQ1, allowing a nucleophilic attack on the C1' of the ribose to form the product. After dissociation, two additional enzymatic reactions on the tRNA convert PreQ1 to queuine (Q), resulting in the hypermodified nucleoside queuosine (7-(((4,5-cis-dihydroxy-2-cyclopenten-1-yl)amino)methyl)-7-deazaguanosine). The sequence is that of Queuine tRNA-ribosyltransferase from Staphylococcus aureus (strain bovine RF122 / ET3-1).